The sequence spans 165 residues: Nicotine 6-hydroxylase small subunit (165 aa).

The 2Fe-2S ferredoxin-type domain maps to 10–86 (VEIDVEVNGR…GRSIRTVEDL (77 aa)). 4 residues coordinate [2Fe-2S] cluster: C48, C53, C56, and C68.

Heterotrimer composed of a large subunit (NdhL), a medium subunit (NdhM) and a small subunit (NdhS). [2Fe-2S] cluster is required as a cofactor.

It localises to the cytoplasm. The enzyme catalyses (R)-nicotine + A + H2O = (R)-6-hydroxynicotine + AH2. It carries out the reaction (S)-nicotine + A + H2O = (S)-6-hydroxynicotine + AH2. Its pathway is alkaloid degradation; nicotine degradation; 6-hydroxypseudooxynicotine from nicotine (R-isomer route): step 1/2. It functions in the pathway alkaloid degradation; nicotine degradation; 6-hydroxypseudooxynicotine from nicotine (S-isomer route): step 1/2. Nicotine dehydrogenase activity is inhibited by tungsten. Its function is as follows. Component of the nicotine 6-hydroxylase, which is involved in the degradation of nicotine. Catalyzes the hydroxylation of the pyridine ring at C6 to form 6-hydroxynicotine. Can use both L-nicotine and D-nicotine. The polypeptide is Nicotine 6-hydroxylase small subunit (Paenarthrobacter nicotinovorans (Arthrobacter nicotinovorans)).